The primary structure comprises 313 residues: Ribosomal RNA small subunit methyltransferase H (313 aa).

S-adenosyl-L-methionine is bound by residues Gly-35–His-37, Asp-55, Phe-79, Asp-101, and Gln-108.

It belongs to the methyltransferase superfamily. RsmH family.

Its subcellular location is the cytoplasm. It carries out the reaction cytidine(1402) in 16S rRNA + S-adenosyl-L-methionine = N(4)-methylcytidine(1402) in 16S rRNA + S-adenosyl-L-homocysteine + H(+). Specifically methylates the N4 position of cytidine in position 1402 (C1402) of 16S rRNA. The protein is Ribosomal RNA small subunit methyltransferase H of Musicola paradisiaca (strain Ech703) (Dickeya paradisiaca).